Reading from the N-terminus, the 266-residue chain is Hydroxyethylthiazole kinase (266 aa).

Residue M39 participates in substrate binding. Residues K115 and T160 each coordinate ATP. A substrate-binding site is contributed by G187.

Belongs to the Thz kinase family. Mg(2+) is required as a cofactor.

It catalyses the reaction 5-(2-hydroxyethyl)-4-methylthiazole + ATP = 4-methyl-5-(2-phosphooxyethyl)-thiazole + ADP + H(+). It functions in the pathway cofactor biosynthesis; thiamine diphosphate biosynthesis; 4-methyl-5-(2-phosphoethyl)-thiazole from 5-(2-hydroxyethyl)-4-methylthiazole: step 1/1. Catalyzes the phosphorylation of the hydroxyl group of 4-methyl-5-beta-hydroxyethylthiazole (THZ). The polypeptide is Hydroxyethylthiazole kinase (Staphylococcus aureus (strain MSSA476)).